A 445-amino-acid polypeptide reads, in one-letter code: 23S rRNA (uracil(1939)-C(5))-methyltransferase RlmD (445 aa).

A TRAM domain is found at 12–70; it reads SKQLSSKLSLNVTQLDHLGAGIAHHQGKIVFINGALPGETVQVQLTEQKKKFSRAKLLK. Residues Cys83, Cys89, Cys92, and Cys171 each contribute to the [4Fe-4S] cluster site. S-adenosyl-L-methionine is bound by residues Gln278, Phe307, Asn312, Glu328, Asp355, and Asp375. Cys401 (nucleophile) is an active-site residue.

The protein belongs to the class I-like SAM-binding methyltransferase superfamily. RNA M5U methyltransferase family. RlmD subfamily.

It carries out the reaction uridine(1939) in 23S rRNA + S-adenosyl-L-methionine = 5-methyluridine(1939) in 23S rRNA + S-adenosyl-L-homocysteine + H(+). Catalyzes the formation of 5-methyl-uridine at position 1939 (m5U1939) in 23S rRNA. The protein is 23S rRNA (uracil(1939)-C(5))-methyltransferase RlmD of Shewanella piezotolerans (strain WP3 / JCM 13877).